We begin with the raw amino-acid sequence, 101 residues long: Feather keratin Cos2-2 (101 aa).

Ser2 is modified (N-acetylserine).

The protein belongs to the avian keratin family. As to quaternary structure, the avian keratins (F-ker, S-ker, C-ker and B-ker) are a complex mixture of very similar polypeptides.

The polypeptide is Feather keratin Cos2-2 (Columba livia (Rock dove)).